The sequence spans 374 residues: O-methyltransferase acrG (374 aa).

S-adenosyl-L-homocysteine contacts are provided by Y19, N70, D96, S128, and F129. F245 serves as a coordination point for Mg(2+).

Belongs to the methyltransferase superfamily. Type-7 methyltransferase family.

Its pathway is secondary metabolite biosynthesis. Functionally, O-methyltransferase; part of the cluster that mediates the biosynthesis of acurin A, a highly reduced polyketide coupled to a serine via a peptide bond. The activities of the highly reducing polyketide synthase acrA and the nonribosomal peptide synthetase acrB are collectively responsible for the synthesis of the acurin A core structure with a heptaketide backbone produced by acrA covalently fused to a L-serine by acrB. After the formation of the PK-NRP hybrid product, it is detached from acrB by reductive release to set up the formation of the lactam ring by aldol condensation. The hydrolyase acrC then catalyzes water loss to generate a double bond in the ring. This double bond is probably reduced, which is followed by three oxidations at C-22 to generate the carboxylic acid moiety, involving probably the FAD-binding monooxygenase acrE and the cytochrome P450 monooxygenases acrD and acrF. Finally, a last methylation step performed by the O-methyltransferase acrG leads to the production of acurin A. This is O-methyltransferase acrG from Aspergillus aculeatus (strain ATCC 16872 / CBS 172.66 / WB 5094).